Reading from the N-terminus, the 23-residue chain is Phallacidin proprotein (23 aa).

A propeptide is located at residue proline 1. The segment at residues 2-8 (AWLVDCP) is a cross-link (cyclopeptide (Ala-Pro)). Residues 3–7 (WLVDC) constitute a cross-link (2'-cysteinyl-6'-hydroxytryptophan sulfoxide (Trp-Cys)). Positions 9 to 23 (CVGDDVNFILTRGQK) are excised as a propeptide.

It belongs to the MSDIN fungal toxin family. In terms of processing, processed by the macrocyclase-peptidase enzyme POPB to yield a toxic cyclic heptapeptide. POPB first removes 10 residues from the N-terminus. Conformational trapping of the remaining peptide forces the enzyme to release this intermediate rather than proceed to macrocyclization. The enzyme rebinds the remaining peptide in a different conformation and catalyzes macrocyclization of the N-terminal 7 residues.

Functionally, major toxin that belongs to the bicyclic heptapeptides called phallotoxins. Although structurally related to amatoxins, phallotoxins have a different mode of action, which is the stabilization of F-actin. Phallotoxins are poisonous when administered parenterally, but not orally because of poor absorption. The sequence is that of Phallacidin proprotein from Amanita fuligineoides.